The sequence spans 695 residues: Highly divergent homeobox (695 aa).

DNA-binding regions (homeobox) lie at residues 3-63 and 440-503; these read LRSV…SSKS and ALQD…RLMG. The disordered stretch occupies residues 56 to 81; that stretch reads RRKMSSKSALESGGAPPGTAHTAPSV. Residues 653–695 form a disordered region; it reads QQALLSDLPPELEEMDFNHTSPEPDDTSFSLSSLSEKNASDSL. Positions 679–695 are enriched in polar residues; the sequence is TSFSLSSLSEKNASDSL.

The protein resides in the nucleus. In Gallus gallus (Chicken), this protein is Highly divergent homeobox (HDX).